We begin with the raw amino-acid sequence, 419 residues long: Ribosomal RNA large subunit methyltransferase G (419 aa).

Residues 386–408 (KAEPFETHPTEAEAKVEVTESKP) are compositionally biased toward basic and acidic residues. Residues 386 to 419 (KAEPFETHPTEAEAKVEVTESKPHPQSSLYGTKK) are disordered. Residues 409 to 419 (HPQSSLYGTKK) are compositionally biased toward polar residues.

This sequence belongs to the methyltransferase superfamily. RlmG family.

Its subcellular location is the cytoplasm. The enzyme catalyses guanosine(1835) in 23S rRNA + S-adenosyl-L-methionine = N(2)-methylguanosine(1835) in 23S rRNA + S-adenosyl-L-homocysteine + H(+). Functionally, specifically methylates the guanine in position 1835 (m2G1835) of 23S rRNA. This Shewanella woodyi (strain ATCC 51908 / MS32) protein is Ribosomal RNA large subunit methyltransferase G.